A 777-amino-acid polypeptide reads, in one-letter code: Subtilisin-like protease SBT1.4 (777 aa).

The signal sequence occupies residues 1–25 (MAKLSLSSIFFVFPLLLCFFSPSSS). The propeptide at 26-110 (SSDGLESYIV…VIPDQAREIH (85 aa)) is activation peptide. In terms of domain architecture, Inhibitor I9 spans 32–110 (SYIVHVQRSH…VIPDQAREIH (79 aa)). The Peptidase S8 domain maps to 115 to 614 (PAFLGFSQNS…AGHVDPNKAL (500 aa)). D142 serves as the catalytic Charge relay system. N198 is a glycosylation site (N-linked (GlcNAc...) asparagine). The disordered stretch occupies residues 199–223 (GTKKHAAKESRSPRDTEGHGTHTAS). Positions 205–218 (AKESRSPRDTEGHG) are enriched in basic and acidic residues. Residue H217 is the Charge relay system of the active site. 2 N-linked (GlcNAc...) asparagine glycosylation sites follow: N232 and N395. In terms of domain architecture, PA spans 376-461 (LSLVYSGDCG…VGAKAGDQIR (86 aa)). S546 (charge relay system) is an active-site residue.

This sequence belongs to the peptidase S8 family.

It is found in the secreted. This Arabidopsis thaliana (Mouse-ear cress) protein is Subtilisin-like protease SBT1.4.